The sequence spans 165 residues: MAIKTKTIRRKKIPFLQRIYLPFIFAGMARTFRHFFRNLKDSSNIDFLEYPEQKPTDITNRYRGLHRLTKNEKGDLKCVACDMCATACPANCIFITATEIEGSKEKAPSKFTIDLLECVFCGLCVEACPKDAIRMDTGIFTKVGNTRESFLADIKTLSQREEGSF.

2 4Fe-4S ferredoxin-type domains span residues 66–98 (HRLT…ITAT) and 109–138 (SKFT…MDTG). The [4Fe-4S] cluster site is built by Cys78, Cys81, Cys84, Cys88, Cys118, Cys121, Cys124, and Cys128.

It belongs to the complex I 23 kDa subunit family. In terms of assembly, NDH-1 is composed of 14 different subunits. Subunits NuoA, H, J, K, L, M, N constitute the membrane sector of the complex. It depends on [4Fe-4S] cluster as a cofactor.

Its subcellular location is the cell inner membrane. The catalysed reaction is a quinone + NADH + 5 H(+)(in) = a quinol + NAD(+) + 4 H(+)(out). Functionally, NDH-1 shuttles electrons from NADH, via FMN and iron-sulfur (Fe-S) centers, to quinones in the respiratory chain. The immediate electron acceptor for the enzyme in this species is believed to be ubiquinone. Couples the redox reaction to proton translocation (for every two electrons transferred, four hydrogen ions are translocated across the cytoplasmic membrane), and thus conserves the redox energy in a proton gradient. This Campylobacter fetus subsp. fetus (strain 82-40) protein is NADH-quinone oxidoreductase subunit I.